The sequence spans 212 residues: Pyrrolidone-carboxylate peptidase (212 aa).

Residues E78, C141, and H165 contribute to the active site.

Belongs to the peptidase C15 family. Homotetramer.

It is found in the cytoplasm. It carries out the reaction Release of an N-terminal pyroglutamyl group from a polypeptide, the second amino acid generally not being Pro.. Its function is as follows. Removes 5-oxoproline from various penultimate amino acid residues except L-proline. The protein is Pyrrolidone-carboxylate peptidase of Staphylococcus aureus (strain Mu3 / ATCC 700698).